A 258-amino-acid chain; its full sequence is Alpha-fibrinogenase-like (258 aa).

Positions 1 to 18 are cleaved as a signal peptide; the sequence is MVLIRVLANLLVLQLSYA. A propeptide spanning residues 19–24 is cleaved from the precursor; it reads QKSSEL. One can recognise a Peptidase S1 domain in the interval 25-249; it reads VVGGHPCNIY…YTDWIHSIIA (225 aa). 6 disulfide bridges follow: Cys-31-Cys-163, Cys-50-Cys-66, Cys-98-Cys-256, Cys-142-Cys-210, Cys-174-Cys-189, and Cys-200-Cys-225. A glycan (N-linked (GlcNAc...) asparagine) is linked at Asn-44. Catalysis depends on charge relay system residues His-65 and Asp-110. Ser-204 serves as the catalytic Charge relay system.

The protein belongs to the peptidase S1 family. Snake venom subfamily. Monomer. As to expression, expressed by the venom gland.

The protein localises to the secreted. Its function is as follows. Degrades alpha chain of fibrinogen (FGA), and has strong caseinolytic activity. Cleaves oxidized insulin B-chain at '40-Tyr-|-Leu-41', '48-Phe-|-Phe-49' and '49-Phe-|-Tyr-50', and glucagon at the bonds '62-Tyr-|-Ser-63', 66-Leu-|-Asp-67' and '78-Leu-|-Met-79' bonds. The sequence is that of Alpha-fibrinogenase-like from Daboia siamensis (Eastern Russel's viper).